A 438-amino-acid polypeptide reads, in one-letter code: Trigger factor (438 aa).

The 86-residue stretch at 160-245 folds into the PPIase FKBP-type domain; the sequence is DDKVTIDFVG…VKKIQQAELP (86 aa).

It belongs to the FKBP-type PPIase family. Tig subfamily.

It is found in the cytoplasm. The enzyme catalyses [protein]-peptidylproline (omega=180) = [protein]-peptidylproline (omega=0). Functionally, involved in protein export. Acts as a chaperone by maintaining the newly synthesized protein in an open conformation. Functions as a peptidyl-prolyl cis-trans isomerase. The protein is Trigger factor of Francisella tularensis subsp. tularensis (strain FSC 198).